The following is a 147-amino-acid chain: MVHLTGEEKSAVTTLWGKVNVDEVGGEALGRLLVVYPWTQRFFESFGDLSSPDAVMGNPKVKAHGKKVLGAFSDGLAHLDNLKGTFAQLSELHCDKLHVDPENFRLLGNVLVCVLAHHFGKEFTPQLQAAYQKVVAGVANALAHKYH.

Val-2 is subject to N-acetylvaline. The Globin domain occupies 3–147; it reads HLTGEEKSAV…VANALAHKYH (145 aa). Thr-13 carries the phosphothreonine modification. The residue at position 45 (Ser-45) is a Phosphoserine. Lys-60 carries the post-translational modification N6-acetyllysine. His-64 serves as a coordination point for heme b. N6-acetyllysine is present on Lys-83. Heme b is bound at residue His-93. Cys-94 carries the post-translational modification S-nitrosocysteine. Lys-145 carries the N6-acetyllysine modification.

It belongs to the globin family. As to quaternary structure, heterotetramer of two alpha chains and two beta chains. As to expression, red blood cells.

Involved in oxygen transport from the lung to the various peripheral tissues. This is Hemoglobin subunit beta (HBB) from Ateles paniscus (Black spider monkey).